The sequence spans 807 residues: Glycerol-3-phosphate acyltransferase (807 aa).

Positions 305–310 match the HXXXXD motif motif; the sequence is CHRSHM.

It belongs to the GPAT/DAPAT family.

It is found in the cell inner membrane. The enzyme catalyses sn-glycerol 3-phosphate + an acyl-CoA = a 1-acyl-sn-glycero-3-phosphate + CoA. It functions in the pathway phospholipid metabolism; CDP-diacylglycerol biosynthesis; CDP-diacylglycerol from sn-glycerol 3-phosphate: step 1/3. The protein is Glycerol-3-phosphate acyltransferase of Shigella boydii serotype 18 (strain CDC 3083-94 / BS512).